The following is a 2467-amino-acid chain: Transcription factor TFIIIB component B'' homolog (2467 aa).

Disordered regions lie at residues 1 to 145 (MFRR…RYRI) and 159 to 243 (LRKE…VDDG). The segment at 1-301 (MFRRARLSVK…TYSSFRKNYY (301 aa)) is interaction with ZBTB43. The segment covering 81–92 (AAESSTLSSASS) has biased composition (low complexity). Polar residues predominate over residues 99–118 (SSTSSLVQPSGSAPSQSRPL). Composition is skewed to basic and acidic residues over residues 133–144 (AKEKQPCSDRYR) and 177–186 (RPPDRSKMTM). A coiled-coil region spans residues 144 to 177 (RIYKARKLREMLKEELRKEKKQWKNKFSTNESQR). The segment covering 231 to 242 (NDNEDVEEEVDD) has biased composition (acidic residues). The Myb-like domain maps to 297–347 (RKNYYSKPWSNKETDMFFLAISMVGTDFSMIGQLFPHRARIEIKNKFKREE). The required for phosphorylation by CSNK2A1 stretch occupies residues 357 to 472 (AFQEKRPFDF…QEKKRRRNQG (116 aa)). Disordered regions lie at residues 380–513 (EEKR…ECNK), 576–720 (SADM…VKAA), 748–844 (PPQT…PATW), 866–893 (LTAT…NAEM), 971–1200 (LQEN…SSKI), 1231–1270 (LGRH…VKPA), 1318–1388 (DSDQ…LVPI), 1409–1448 (LPVR…PELQ), 1527–1561 (KAKP…EDHL), 1592–1706 (IHSE…RASK), 1902–1926 (IVSK…LPTR), 1977–2014 (IQRE…QCVG), 2058–2083 (LDSG…SDVP), 2179–2206 (LVVQ…DLTS), 2260–2290 (GIFP…SGSL), and 2304–2449 (LPQS…EEVT). The stretch at 458-487 (EQDQNQEKKRRRNQGEANKQEATNLLERVL) forms a coiled coil. Over residues 649 to 660 (AAEKNHMEKETM) the composition is skewed to basic and acidic residues. The span at 809–824 (RFQKPKPNTGRRRRRI) shows a compositional bias: basic residues. Composition is skewed to basic and acidic residues over residues 873 to 884 (KDSESDVKDSGR), 992 to 1002 (TGKDLAMKEST), 1009 to 1041 (TEER…RGEM), 1089 to 1098 (EGKELNLRET), 1112 to 1130 (EKTD…ERES), and 1150 to 1170 (DLGK…EEHS). Polar residues-rich tracts occupy residues 1180 to 1200 (LSSS…SSKI), 1251 to 1265 (DTNL…QQPL), 1318 to 1330 (DSDQ…QHNV), and 1364 to 1382 (PPNS…NQEN). 3 stretches are compositionally biased toward basic and acidic residues: residues 1429-1448 (QIVE…PELQ), 1536-1561 (RRKD…EDHL), and 1592-1603 (IHSEESGSDRND). Composition is skewed to polar residues over residues 1621 to 1642 (EQPT…SSCP) and 1650 to 1665 (YPKT…SSAS). Over residues 1688–1697 (RGSKRIRGKT) the composition is skewed to basic residues. Composition is skewed to basic and acidic residues over residues 1902 to 1913 (IVSKEQSNRDAA), 1977 to 1996 (IQRE…DKSH), and 2068 to 2078 (AAKEALKETPK). A compositionally biased stretch (low complexity) spans 2185–2199 (PSLSPSRSGSSEKPP). Composition is skewed to polar residues over residues 2262–2273 (FPTSESTHATSK), 2319–2334 (PASN…SSSK), and 2414–2429 (TAGS…SSDQ).

Component of TFIIIB complex. The TFIIIB complex has two activities, alpha and beta. The TFIIIB-alpha and TFIIIB-beta activities are required for transcription of genes with TFIIIC-bound internal promoters and PSE transcription factor-bound external promoters, respectively. The TFIIIB-alpha activity complex is composed of TBP, BDP1, and a complex containing both BRF2 and at least four stably associated proteins; YY1 facilitates the formation of TFIIIB-alpha activity complex. The TFIIIB-beta activity complex is composed of TBP, BDP1, and BRF1. Interacts with BRF1; this interaction diminishes during mitosis resulting in the release of BDP1 from chromosomal templates. Component of TFIIIC complex. The TFIIIC complex has two activities, C1 and C2. The TFIIIC2 activity complex is only required for transcription of the 'classical' pol III genes whereas the TFIIIC1 activity complex is required for transcription of all pol III genes. The TFIIIC1 activity complex is composed at least of BDP1. Interacts with ZBTB43. Post-translationally, phosphorylated by CSNK2A1 during mitosis, resulting in its release from chromatin and suppression of polymerase III transcription. Expressed in the cochlea, particularly in the spiral ligament, the capillaries of the stria vascularis and the basilar membrane.

The protein resides in the nucleus. Its function is as follows. General activator of RNA polymerase III transcription. Requires for transcription from all three types of polymerase III promoters. Requires for transcription of genes with internal promoter elements and with promoter elements upstream of the initiation site. The chain is Transcription factor TFIIIB component B'' homolog (Bdp1) from Mus musculus (Mouse).